The following is a 119-amino-acid chain: Large ribosomal subunit protein bL19 (119 aa).

It belongs to the bacterial ribosomal protein bL19 family.

Its function is as follows. This protein is located at the 30S-50S ribosomal subunit interface and may play a role in the structure and function of the aminoacyl-tRNA binding site. The sequence is that of Large ribosomal subunit protein bL19 from Pediococcus pentosaceus (strain ATCC 25745 / CCUG 21536 / LMG 10740 / 183-1w).